The following is a 551-amino-acid chain: Putative ABC transporter ATP-binding protein BA_3364/GBAA_3364/BAS3118 (551 aa).

ABC transporter domains are found at residues Ala-5–Phe-243 and Leu-293–Arg-525. Residues Gly-39 to Thr-46 and Gly-327 to Ser-334 contribute to the ATP site.

This sequence belongs to the ABC transporter superfamily.

Its subcellular location is the cell membrane. Probably part of an ABC transporter complex. Responsible for energy coupling to the transport system. This Bacillus anthracis protein is Putative ABC transporter ATP-binding protein BA_3364/GBAA_3364/BAS3118.